A 401-amino-acid chain; its full sequence is Phosphoglycerate kinase (401 aa).

Residues 20–22, Arg-35, 58–61, Arg-117, and Arg-154 contribute to the substrate site; these read DFN and HLGR. Residues Lys-204, Gly-298, Glu-329, and 358-361 each bind ATP; that span reads GGDS.

This sequence belongs to the phosphoglycerate kinase family. In terms of assembly, monomer.

The protein resides in the cytoplasm. The enzyme catalyses (2R)-3-phosphoglycerate + ATP = (2R)-3-phospho-glyceroyl phosphate + ADP. It participates in carbohydrate degradation; glycolysis; pyruvate from D-glyceraldehyde 3-phosphate: step 2/5. The polypeptide is Phosphoglycerate kinase (Bifidobacterium longum subsp. infantis (strain ATCC 15697 / DSM 20088 / JCM 1222 / NCTC 11817 / S12)).